Consider the following 197-residue polypeptide: Probable UbiX-like flavin prenyltransferase (197 aa).

FMN is bound by residues 9–11 (GAT), Ser36, 87–90 (SMKT), and Arg122.

It belongs to the UbiX/PAD1 family. YclB subfamily. In terms of assembly, homododecamer.

It catalyses the reaction dimethylallyl phosphate + FMNH2 = prenylated FMNH2 + phosphate. Its function is as follows. Involved in the non-oxidative decarboxylation and detoxification of phenolic derivatives under both aerobic and anaerobic conditions. Flavin prenyltransferase that catalyzes the synthesis of the prenylated FMN cofactor (prenyl-FMN) for phenolic acid decarboxylase. The protein is Probable UbiX-like flavin prenyltransferase of Escherichia coli O157:H7.